A 221-amino-acid chain; its full sequence is NEP1-interacting protein-like 1 (221 aa).

3 consecutive transmembrane segments (helical) span residues leucine 35 to isoleucine 55, valine 69 to tryptophan 89, and glycine 95 to valine 115. The RING-type; atypical zinc-finger motif lies at cysteine 176–arginine 218.

It belongs to the RING-type zinc finger family. NIP subfamily.

The protein localises to the membrane. In terms of biological role, may be involved in the early steps of the plant defense signaling pathway. This chain is NEP1-interacting protein-like 1 (ATL27), found in Arabidopsis thaliana (Mouse-ear cress).